The chain runs to 90 residues: Small ribosomal subunit protein uS15c (90 aa).

This sequence belongs to the universal ribosomal protein uS15 family. Part of the 30S ribosomal subunit.

It localises to the plastid. Its subcellular location is the chloroplast. In Morus indica (Mulberry), this protein is Small ribosomal subunit protein uS15c (rps15).